We begin with the raw amino-acid sequence, 186 residues long: Interferon beta-3 (186 aa).

The signal sequence occupies residues methionine 1–serine 21. Cysteine 52 and cysteine 161 are joined by a disulfide. N-linked (GlcNAc...) asparagine glycans are attached at residues asparagine 131 and asparagine 173.

Belongs to the alpha/beta interferon family. In terms of assembly, monomer.

It is found in the secreted. Has antiviral, antibacterial and anticancer activities. The polypeptide is Interferon beta-3 (IFNB3) (Bos taurus (Bovine)).